The following is a 376-amino-acid chain: Actin-related protein T1 (376 aa).

Belongs to the actin family. As to expression, in skin, expressed in the basal, spinous and granular layers of the epidermis. Also expressed in hair follicles, sebaceaous glands, eccrine sweat glands and semen.

The protein localises to the cytoplasm. It localises to the cytoskeleton. Its subcellular location is the nucleus. The protein resides in the cytoplasmic vesicle. It is found in the secretory vesicle. The protein localises to the acrosome. Negatively regulates the Hedgehog (SHH) signaling. Binds to the promoter of the SHH signaling mediator, GLI1, and inhibits its expression. This chain is Actin-related protein T1, found in Homo sapiens (Human).